The following is a 1078-amino-acid chain: Extracellular calcium-sensing receptor (1078 aa).

The N-terminal stretch at 1–19 (MAFYSCCWVLLALTWHTSA) is a signal peptide. The Extracellular portion of the chain corresponds to 20-610 (YGPDQRAQKK…KEIEFLSWTE (591 aa)). The ligand-binding 1 (LB1) stretch occupies residues 22–188 (PDQRAQKKGD…QFKSFLRTIP (167 aa)). The cysteines at positions 60 and 101 are disulfide-linked. 66 to 70 (RGFRW) serves as a coordination point for phosphate. Residues Ile-81, Ser-84, Leu-87, and Leu-88 each coordinate Ca(2+). An N-linked (GlcNAc...) asparagine glycan is attached at Asn-90. A Ca(2+)-binding site is contributed by Thr-100. Asn-130 carries N-linked (GlcNAc...) asparagine glycosylation. Residue Thr-145 coordinates Ca(2+). Residues Ser-147, Ala-168, and Ser-170 each coordinate L-tryptophan. Residues Ser-170, Pro-188, Asp-190, Glu-231, and Asp-234 each contribute to the Ca(2+) site. The tract at residues 189-324 (NDEHQATAMA…GGTIGFALKA (136 aa)) is ligand-binding 2 (LB2). Disulfide bonds link Cys-236–Cys-561, Cys-358–Cys-395, Cys-437–Cys-449, Cys-542–Cys-562, Cys-546–Cys-565, Cys-568–Cys-582, and Cys-585–Cys-598. Spermine contacts are provided by Asp-238 and Ser-240. N-linked (GlcNAc...) asparagine glycans are attached at residues Asn-261 and Asn-287. Glu-297 serves as a coordination point for Ca(2+). Residue Glu-297 participates in L-tryptophan binding. 2 N-linked (GlcNAc...) asparagine glycosylation sites follow: Asn-386 and Asn-400. Position 415–417 (415–417 (RIS)) interacts with phosphate. Residues Asn-446, Asn-468, and Asn-488 are each glycosylated (N-linked (GlcNAc...) asparagine). Tyr-489 contributes to the Ca(2+) binding site. Asn-541 carries an N-linked (GlcNAc...) asparagine glycan. The tract at residues 542–612 (CSRDCLAGTR…IEFLSWTEPF (71 aa)) is cysteine-rich (CR). Residue Gly-557 participates in Ca(2+) binding. Residue Asn-594 is glycosylated (N-linked (GlcNAc...) asparagine). A helical transmembrane segment spans residues 611 to 636 (PFGIALTLFAVLGIFLTAFVLGVFIK). Over 637–648 (FRNTPIVKATNR) the chain is Cytoplasmic. An intracellular loop 1 (ICL1) region spans residues 637-648 (FRNTPIVKATNR). Residues 649–668 (ELSYLLLFSLLCCFSSSLFF) form a helical membrane-spanning segment. At 669–674 (IGEPQD) the chain is on the extracellular side. Residues 675-698 (WTCRLRQPAFGISFVLCISCILVK) form a helical membrane-spanning segment. Over 699 to 722 (TNRVLLVFEAKIPTSFHRKWWGLN) the chain is Cytoplasmic. An intracellular loop 2 (ICL2) region spans residues 699-722 (TNRVLLVFEAKIPTSFHRKWWGLN). A helical membrane pass occupies residues 723–745 (LQFLLVFLCTFMQIVICVIWLYT). Over 746 to 769 (APPSSYRNQELEDEIIFITCHEGS) the chain is Extracellular. Residues 770–789 (LMALGFLIGYTCLLAAICFF) traverse the membrane as a helical segment. Residues 790–805 (FAFKSRKLPENFNEAK) are Cytoplasmic-facing. Residues 790–805 (FAFKSRKLPENFNEAK) are intracellular loop 3 (ICL3). A helical transmembrane segment spans residues 806-828 (FITFSMLIFFIVWISFIPAYAST). Residues 829–832 (YGKF) are Extracellular-facing. A helical membrane pass occupies residues 833–854 (VSAVEVIAILAASFGLLACIFF). Residues 855–1078 (NKIYIILFKP…STVTENVVNS (224 aa)) are Cytoplasmic-facing. Residues 855 to 1078 (NKIYIILFKP…STVTENVVNS (224 aa)) are C-terminus. Residues 880 to 900 (AFKVAARATLRRSNVSRKRSS) form an interaction with RNF19A region. Phosphothreonine; by PKC is present on Thr-888. The tract at residues 890–898 (RRSNVSRKR) is arginine-rich retention motif. Ser-892 is subject to Phosphoserine; by PKC. 3 disordered regions span residues 892–963 (SNVS…PRCK), 986–1006 (AMAHRNSTHQNSLEAQKSSDT), and 1030–1055 (TGLQGPVGGDQRPEVEDPEELSPALV). Residue Ser-899 is modified to Phosphoserine; by PKA. The segment covering 900–918 (SSLGGSTGSTPSSSISSKS) has biased composition (low complexity). At Ser-920 the chain carries Phosphoserine. The span at 932–960 (QQQPLALTQQEQQQQPLTLPQQQRSQQQP) shows a compositional bias: low complexity. The segment covering 993-1006 (THQNSLEAQKSSDT) has biased composition (polar residues). Phosphoserine is present on Ser-1061.

It belongs to the G-protein coupled receptor 3 family. Homodimer; disulfide-linked. Interacts with VCP. Interacts with ARRB1. Post-translationally, phosphorylation at Thr-888 by PKC impairs coupling with G(q)/G(11) G-proteins, while it does not affect G(i)/G(o)-coupling. Phosphorylation at Ser-892 by PKC and Ser-899 by PKA promote plasma membrane localization. In terms of processing, ubiquitinated by RNF19A; which induces proteasomal degradation. N-glycosylated. In terms of tissue distribution, expressed in the temporal lobe, frontal lobe, parietal lobe, hippocampus, and cerebellum. Also found in kidney, lung, liver, heart, skeletal muscle, placenta.

It localises to the cell membrane. With respect to regulation, in resting state, adopts an open conformation, anion-binding promoting the inactive configuration. Upon aromatic amino acid-binding, the groove in the extracellular venus flytrap module is closed, thereby inducing the formation of a novel homodimer interface between subunits. Calcium ions stabilize the active state by enhancing homodimer interactions between membrane-proximal domains to fully activate the receptor. Upon activation, the homodimer adopts an asymmetric configuration of the 7-transmembrane region that primes one protomer for G-protein coupling. G-protein binding expands the transmembrane dimer interface; the restriction imposed by the receptor dimer, in combination with intracellular loop 2 (ICL2), enables G-protein activation by facilitating conformational transition of G-protein alpha. Coupling to different classes of G-proteins results in distinct CASR-G-protein interfaces. Activated by glucose, which acts as a positive allosteric modulator. Activated by positive allosteric modulator drugs cinacalcet, evocalcet and etelcalcetide, which are clinically used for the treatment of hyperparathyroidism and familial hypocalciuric hypercalcemia. Inhibited by NPS-2143, a negative allosteric modulator tested for the treatment of hypocalcemia. Activated by velcalcetide (AMG 416), a D-amino acid-containing peptide agonist that is being evaluated for the treatment of secondary hyperparathyroidism in chronic kidney disease patients receiving hemodialysis. Velcalcetide agonist acts by forming a disulfide bond with Cys-482. In terms of biological role, G-protein-coupled receptor that senses changes in the extracellular concentration of calcium ions and plays a key role in maintaining calcium homeostasis. Senses fluctuations in the circulating calcium concentration: activated by elevated circulating calcium, leading to decreased parathyroid hormone (PTH) secretion in parathyroid glands. In kidneys, acts as a key regulator of renal tubular calcium resorption. Ligand binding causes a conformation change that triggers signaling via guanine nucleotide-binding proteins (G-proteins) and modulates the activity of downstream effectors. CASR is coupled with different G(q)/G(11), G(i)/G(o)- or G(s)-classes of G-proteins depending on the context. In the parathyroid and kidney, CASR signals through G(q)/G(11) and G(i)/G(o) G-proteins: G(q)/G(11) coupling activates phospholipase C-beta, releasing diacylglycerol (DAG) and inositol 1,4,5-trisphosphate (IP3) second messengers, while G(i)/G(o) coupling mediates inhibition of adenylate cyclase activity. The G-protein-coupled receptor activity is activated by a co-agonist mechanism: aromatic amino acids, such as Trp or Phe, act concertedly with divalent cations, such as calcium or magnesium, to achieve full receptor activation. Acts as an activator of the NLRP3 inflammasome via G(i)/G(o)-mediated signaling: down-regulation of cyclic AMP (cAMP) relieving NLRP3 inhibition by cAMP. Acts as a regulator of proton-sensing receptor GPR68 in a seesaw manner: CASR-mediated signaling inhibits GPR68 signaling in response to extracellular calcium, while GPR68 inhibits CASR in presence of extracellular protons. This is Extracellular calcium-sensing receptor from Homo sapiens (Human).